A 243-amino-acid chain; its full sequence is MWRRQVGALLLRHRSTPSSTLRHHLPLPVPDQSPPLASNLLLRLFTSQSGEGGDGATKPFIAFVLGGPGSGKGTQCVRIASDFGFAHLSAGDLLRSEISTGREKGELILNIIKEGKIVPSEITVELIRKAMESSDAKRVLIDGFPRCEENRIAFERITGTEPDLVIFFDCPEDEMVKRLLGRNQGRVDDNIETIKKRLKVFESLNIPVVDYYTSRGKVHKINATGTEEEIFGAVHKLFSSLRF.

Residue 69–74 coordinates ATP; sequence GSGKGT. The NMP stretch occupies residues 89-118; it reads SAGDLLRSEISTGREKGELILNIIKEGKIV. A ribonucleoside 5'-phosphate contacts are provided by residues arginine 95, 116 to 118, and 143 to 146; these read KIV and GFPR. Position 150 (asparagine 150) interacts with CMP. The interval 181–189 is LID; sequence GRNQGRVDD. An ATP-binding site is contributed by arginine 182. A ribonucleoside 5'-phosphate-binding residues include arginine 186 and arginine 197.

The protein belongs to the adenylate kinase family. UMP-CMP kinase subfamily. Monomer. It depends on Mg(2+) as a cofactor.

The protein localises to the cytoplasm. Its subcellular location is the nucleus. The catalysed reaction is UMP + ATP = UDP + ADP. The enzyme catalyses CMP + ATP = CDP + ADP. It catalyses the reaction dCMP + ATP = dCDP + ADP. Catalyzes the phosphorylation of pyrimidine nucleoside monophosphates at the expense of ATP. Plays an important role in de novo pyrimidine nucleotide biosynthesis. Has preference for UMP and CMP as phosphate acceptors. The chain is UMP-CMP kinase 2 from Oryza sativa subsp. japonica (Rice).